We begin with the raw amino-acid sequence, 506 residues long: RNA-splicing ligase RtcB homolog 1 (506 aa).

Residues Asp-120, Cys-123, His-228, His-260, and His-354 each coordinate Mn(2+). 227-231 (NHYAE) is a GMP binding site. GMP is bound by residues 354 to 355 (HN), 403 to 406 (GGSM), Ser-410, 429 to 432 (HGAG), and Lys-505. The active-site GMP-histidine intermediate is the His-429.

It belongs to the RtcB family. Catalytic component of the tRNA-splicing ligase complex. It depends on Mn(2+) as a cofactor.

It carries out the reaction a 3'-end 3'-phospho-ribonucleotide-RNA + a 5'-end dephospho-ribonucleoside-RNA + GTP = a ribonucleotidyl-ribonucleotide-RNA + GMP + diphosphate. It catalyses the reaction a 3'-end 2',3'-cyclophospho-ribonucleotide-RNA + a 5'-end dephospho-ribonucleoside-RNA + GTP + H2O = a ribonucleotidyl-ribonucleotide-RNA + GMP + diphosphate + H(+). In terms of biological role, catalytic subunit of the tRNA-splicing ligase complex that acts by directly joining spliced tRNA halves to mature-sized tRNAs by incorporating the precursor-derived splice junction phosphate into the mature tRNA as a canonical 3',5'-phosphodiester. May act as an RNA ligase with broad substrate specificity, and may function toward other RNAs. This is RNA-splicing ligase RtcB homolog 1 from Culex quinquefasciatus (Southern house mosquito).